The following is a 338-amino-acid chain: NADPH dehydrogenase (338 aa).

23–26 lines the FMN pocket; that stretch reads SPMC. Residue tyrosine 28 participates in substrate binding. FMN-binding residues include alanine 60 and glutamine 102. Residue 163 to 166 coordinates substrate; the sequence is HGAH. FMN-binding positions include arginine 214 and 306-307; that span reads AR.

Belongs to the NADH:flavin oxidoreductase/NADH oxidase family. NamA subfamily. As to quaternary structure, homotetramer. The cofactor is FMN.

The catalysed reaction is A + NADPH + H(+) = AH2 + NADP(+). Its function is as follows. Catalyzes the reduction of the double bond of an array of alpha,beta-unsaturated aldehydes and ketones. It also reduces the nitro group of nitroester and nitroaromatic compounds. It could have a role in detoxification processes. This is NADPH dehydrogenase from Halalkalibacterium halodurans (strain ATCC BAA-125 / DSM 18197 / FERM 7344 / JCM 9153 / C-125) (Bacillus halodurans).